A 206-amino-acid chain; its full sequence is Guanylate kinase (206 aa).

The region spanning 5–183 (FNLLILSGPS…SKEIILSIAK (179 aa)) is the Guanylate kinase-like domain. Residue 12–19 (GPSGAGKS) participates in ATP binding.

This sequence belongs to the guanylate kinase family.

The protein localises to the cytoplasm. The enzyme catalyses GMP + ATP = GDP + ADP. In terms of biological role, essential for recycling GMP and indirectly, cGMP. The protein is Guanylate kinase of Helicobacter pylori (strain HPAG1).